We begin with the raw amino-acid sequence, 69 residues long: MNKQEFYVLIERDEDGIYIGEVPQLKACYSQGETIDELMQNIREVIELCLEEIELESTSEFIGIQKVVV.

Belongs to the UPF0150 family.

The sequence is that of UPF0150 protein ssr1258 from Synechocystis sp. (strain ATCC 27184 / PCC 6803 / Kazusa).